The primary structure comprises 310 residues: Olfactory receptor 4D1 (310 aa).

At 1–25 (MEPQNTTQVSMFVLLGFSQTQELQK) the chain is on the extracellular side. N-linked (GlcNAc...) asparagine glycosylation occurs at N5. A helical transmembrane segment spans residues 26–49 (FLFLLFLLVYVTTIVGNLLIMVTV). Residues 50 to 57 (TFDCRLHT) lie on the Cytoplasmic side of the membrane. Residues 58–79 (PMYFLLRNLALIDLCYSTVTSP) form a helical membrane-spanning segment. The Extracellular portion of the chain corresponds to 80 to 100 (KMLVDFLHETKTISYQGCMAQ). C97 and C189 are joined by a disulfide. The chain crosses the membrane as a helical span at residues 101–120 (IFFFHLLGGGTVFFLSVMAY). The Cytoplasmic segment spans residues 121-139 (DRYIAISQPLRYVTIMNTQ). A helical transmembrane segment spans residues 140–158 (LCVGLVVAAWVGGFVHSIV). The Extracellular segment spans residues 159-195 (QLALILPLPFCGPNILDNFYCDVPQVLRLACTDTSLL). Residues 196–219 (EFLMISNSGLLVIIWFLLLLISYT) form a helical membrane-spanning segment. Over 220 to 235 (VILVMLRSHSGKARRK) the chain is Cytoplasmic. A helical membrane pass occupies residues 236–258 (AASTCTTHIIVVSMIFIPCIYIY). Residues 259 to 269 (TWPFTPFLMDK) are Extracellular-facing. The helical transmembrane segment at 270–289 (AVSISYTVMTPMLNPMIYTL) threads the bilayer. Topologically, residues 290 to 310 (RNQDMKAAMRRLGKCLVICRE) are cytoplasmic.

This sequence belongs to the G-protein coupled receptor 1 family.

It is found in the cell membrane. In terms of biological role, odorant receptor. In Homo sapiens (Human), this protein is Olfactory receptor 4D1 (OR4D1).